The following is a 105-amino-acid chain: Co-chaperonin GroES (105 aa).

Belongs to the GroES chaperonin family. As to quaternary structure, heptamer of 7 subunits arranged in a ring. Interacts with the chaperonin GroEL.

The protein resides in the cytoplasm. In terms of biological role, together with the chaperonin GroEL, plays an essential role in assisting protein folding. The GroEL-GroES system forms a nano-cage that allows encapsulation of the non-native substrate proteins and provides a physical environment optimized to promote and accelerate protein folding. GroES binds to the apical surface of the GroEL ring, thereby capping the opening of the GroEL channel. The chain is Co-chaperonin GroES from Parvibaculum lavamentivorans (strain DS-1 / DSM 13023 / NCIMB 13966).